Reading from the N-terminus, the 243-residue chain is Voltage-gated monoatomic cation channel TMEM109 (243 aa).

Positions 1–33 are cleaved as a signal peptide; sequence MAGAHSTPLWSRHLLKAVLMVLVALFLVHSASA. The Lumenal segment spans residues 34 to 83; the sequence is QSHREFASPGQQKKETSADILTQIGRSLKEMLDTWLGPETMHVISETLLQ. A helical membrane pass occupies residues 84–104; the sequence is VMWAISSAISVACFALSGIAA. Residues 105-135 are Cytoplasmic-facing; the sequence is QLLSALGLDGEQLTQGLKLSPSQVQTLLLWG. The helical transmembrane segment at 136–156 threads the bilayer; it reads AAALVIYWLLSLLLGLVLALL. Over 157-185 the chain is Lumenal; the sequence is GRILGGLKLVLFVAGFVALVRSVPDPSTR. A helical transmembrane segment spans residues 186–205; that stretch reads ALMLLALLTLFALLSRLTGS. Residues 206–243 are Cytoplasmic-facing; the sequence is RSSGSHLEAKVRGLERQIEELRGRQRRAAKMPRSMEEE.

Homooligomer. Interacts with CRYAB; in the cellular response to DNA damage.

The protein resides in the nucleus outer membrane. Its subcellular location is the endoplasmic reticulum membrane. It is found in the sarcoplasmic reticulum membrane. The catalysed reaction is K(+)(in) = K(+)(out). It catalyses the reaction Ca(2+)(in) = Ca(2+)(out). Functionally, functions as a voltage-gated monoatomic cation channel permeable to both potassium and calcium. Plays a role in the cellular response to DNA damage. The chain is Voltage-gated monoatomic cation channel TMEM109 from Mus musculus (Mouse).